The sequence spans 219 residues: Cytidylate kinase (219 aa).

21–29 (GPAASGKGT) provides a ligand contact to ATP.

Belongs to the cytidylate kinase family. Type 1 subfamily.

Its subcellular location is the cytoplasm. The enzyme catalyses CMP + ATP = CDP + ADP. It carries out the reaction dCMP + ATP = dCDP + ADP. The chain is Cytidylate kinase from Rickettsia conorii (strain ATCC VR-613 / Malish 7).